The chain runs to 515 residues: Bifunctional dihydrofolate reductase-thymidylate synthase (515 aa).

Positions 26–228 constitute a DHFR domain; the sequence is AFSIVVAADQ…LSYEIMKYVP (203 aa). Val30 lines the substrate pocket. NADP(+)-binding positions include Ala32, 38-44, 81-83, and 101-104; these read GIGDGET, RKT, and LSCR. Positions 154, 160, and 178 each coordinate substrate. NADP(+) is bound at residue 155–162; sequence GGARVYTE. Positions 233–515 are thymidylate synthase; that stretch reads ERQYLELIDR…YPPIKMEMAV (283 aa). DUMP is bound at residue Arg253. Cys395 is an active-site residue. DUMP contacts are provided by residues His396, 416–420, Asn428, and 458–460; these read QRCCD and HVY.

This sequence in the N-terminal section; belongs to the dihydrofolate reductase family. In the C-terminal section; belongs to the thymidylate synthase family.

It catalyses the reaction (6S)-5,6,7,8-tetrahydrofolate + NADP(+) = 7,8-dihydrofolate + NADPH + H(+). The enzyme catalyses dUMP + (6R)-5,10-methylene-5,6,7,8-tetrahydrofolate = 7,8-dihydrofolate + dTMP. Its pathway is cofactor biosynthesis; tetrahydrofolate biosynthesis; 5,6,7,8-tetrahydrofolate from 7,8-dihydrofolate: step 1/1. Bifunctional enzyme. Involved in de novo dTMP biosynthesis. Key enzyme in folate metabolism. Catalyzes an essential reaction for de novo glycine and purine synthesis, DNA precursor synthesis, and for the conversion of dUMP to dTMP. The chain is Bifunctional dihydrofolate reductase-thymidylate synthase from Crithidia fasciculata.